We begin with the raw amino-acid sequence, 212 residues long: MNKIAIQKPNIPENLQTADFHDAVTQDDVISMHLFEDCTICGEDIERLCVEKTVFRNVVFIDVSFRHIELTDVIFEKCDLSNADFSGAVIHRTSVKQSKMVGMNVAEATLRNVSFEECHGHFSSFSYSNMKQVRFDHCALMQSECSDTVLQQTHFDGCELEGASFTGTSLQNMDISTCRFEQLHVSLDKLKGCKIAPEHAIAFARALGAVIV.

Pentapeptide repeat domains lie at 63–102 (VSFR…KMVG), 103–142 (MNVA…ALMQ), and 143–182 (SECS…RFEQ).

This is an uncharacterized protein from Bacillus subtilis (strain 168).